The primary structure comprises 1040 residues: Multidrug resistance protein MdtB (1040 aa).

The next 12 helical transmembrane spans lie at 16-36, 347-367, 369-389, 396-416, 440-460, 472-492, 537-557, 863-883, 888-908, 911-931, 968-988, and 998-1018; these read FIMR…AGII, LMMA…NIPA, IIPG…MVFL, LTLM…IVVI, IGFT…PLLF, FAIT…TLTP, WLTL…WVFI, LGST…VLGI, FIHP…ALLA, IAGS…IGIV, ILMT…STGV, and IGMV…TPVI.

Belongs to the resistance-nodulation-cell division (RND) (TC 2.A.6) family. MdtB subfamily. Part of a tripartite efflux system composed of MdtA, MdtB and MdtC. MdtB forms a heteromultimer with MdtC.

The protein resides in the cell inner membrane. Functionally, the MdtABC tripartite complex confers resistance against novobiocin and deoxycholate. The polypeptide is Multidrug resistance protein MdtB (Escherichia coli (strain SE11)).